We begin with the raw amino-acid sequence, 186 residues long: PRA1 family protein G2 (186 aa).

4 consecutive transmembrane segments (helical) span residues Tyr-66 to Ala-86, Ser-87 to Phe-107, Val-119 to Thr-139, and Ala-142 to Phe-162.

This sequence belongs to the PRA1 family. In terms of tissue distribution, expressed in roots and trichomes.

Its subcellular location is the endoplasmic reticulum membrane. Functionally, may be involved in both secretory and endocytic intracellular trafficking in the endosomal/prevacuolar compartments. This is PRA1 family protein G2 (PRA1G2) from Arabidopsis thaliana (Mouse-ear cress).